A 430-amino-acid polypeptide reads, in one-letter code: Proteinase-activated receptor 1 (430 aa).

The first 21 residues, 1 to 21 (MGPRRLLIVALGLSLCGPLLS), serve as a signal peptide directing secretion. Positions 22-41 (SRVPMSQPESERTDATVNPR) are cleaved as a propeptide — removed for receptor activation. The Extracellular segment spans residues 42-107 (SFFLRNPSEN…SGYLTSPWLT (66 aa)). Asn67 and Asn80 each carry an N-linked (GlcNAc...) asparagine glycan. A helical transmembrane segment spans residues 108-133 (LFMPSVYTIVFIVSLPLNVLAIAVFV). Over 134–142 (LRMKVKKPA) the chain is Cytoplasmic. A helical membrane pass occupies residues 143–162 (VVYMLHLAMADVLFVSVLPF). Residues 163–181 (KISYYFSGTDWQFGSGMCR) lie on the Extracellular side of the membrane. The cysteines at positions 180 and 259 are disulfide-linked. Residues 182-203 (FATAAFYGNMYASIMLMTVISI) form a helical membrane-spanning segment. Over 204–223 (DRFLAVVYPIQSLSWRTLGR) the chain is Cytoplasmic. A helical membrane pass occupies residues 224–244 (ANFTCVVIWVMAIMGVVPLLL). The Extracellular segment spans residues 245 to 273 (KEQTTRVPGLNITTCHDVLSENLMQGFYS). A glycan (N-linked (GlcNAc...) asparagine) is linked at Asn255. The helical transmembrane segment at 274–293 (YYFSAFSAIFFLVPLIVSTV) threads the bilayer. At 294-316 (CYTSIIRCLSSSAVANRSKKSRA) the chain is on the cytoplasmic side. Residues 317-339 (LFLSAAVFCIFIVCFGPTNVLLI) form a helical membrane-spanning segment. The Extracellular portion of the chain corresponds to 340-354 (VHYLFLSDSPGTEAA). The chain crosses the membrane as a helical span at residues 355–379 (YFAYLLCVCVSSVSCCIDPLIYYYA). Residues 380-430 (SSECQRHLYSILCCKESSDPNSCNSTGQLMPSKMDTCSSHLNNSIYKKLLA) lie on the Cytoplasmic side of the membrane. Phosphoserine is present on Ser423.

It belongs to the G-protein coupled receptor 1 family. In terms of processing, proteolytic cleavage by thrombin generates a new N-terminus that functions as a tethered ligand. Also proteolytically cleaved by cathepsin CTSG. Phosphorylated in the C-terminal tail; probably mediating desensitization prior to the uncoupling and internalization of the receptor.

It is found in the cell membrane. High affinity receptor that binds the activated thrombin, leading to calcium release from intracellular stores. The thrombin-activated receptor signaling pathway is mediated through PTX-insensitive G proteins, activation of phospholipase C resulting in the production of 1D-myo-inositol 1,4,5-trisphosphate (InsP3) which binds to InsP3 receptors causing calcium release from the stores. In astrocytes, the calcium released into the cytosol allows the Ca(2+)-dependent release of L-glutamate into the synaptic cleft through BEST1, that targets the neuronal postsynaptic GRIN2A/NMDAR receptor resulting in the synaptic plasticity regulation. May play a role in platelets activation and in vascular development. Mediates up-regulation of pro-inflammatory cytokines, such as MCP-1/CCL2 and IL6, triggered by coagulation factor Xa (F10) in cardiac fibroblasts and umbilical vein endothelial cells. The sequence is that of Proteinase-activated receptor 1 from Mus musculus (Mouse).